A 284-amino-acid chain; its full sequence is Tropomyosin (284 aa).

Disordered stretches follow at residues 1–27 (MDAIKKKMQAMKVDRENAQDLAEQMEQ) and 99–131 (YERSEEKLNSTTEKLEEASKAADESERNRKVLE). A coiled-coil region spans residues 1 to 273 (MDAIKKKMQA…KERYKAISDD (273 aa)). A compositionally biased stretch (basic and acidic residues) spans 102–131 (SEEKLNSTTEKLEEASKAADESERNRKVLE).

This sequence belongs to the tropomyosin family. As to quaternary structure, homodimer.

Functionally, tropomyosin, in association with the troponin complex, plays a central role in the calcium dependent regulation of muscle contraction. This Mimachlamys nobilis (Noble scallop) protein is Tropomyosin.